A 221-amino-acid chain; its full sequence is Fructokinase (221 aa).

This sequence belongs to the carbohydrate kinase PfkB family.

The enzyme catalyses D-fructose + ATP = D-fructose 6-phosphate + ADP + H(+). This Salmonella thompson protein is Fructokinase (scrK).